The sequence spans 1030 residues: Carbamoyl phosphate synthase arginine-specific large chain (1030 aa).

The interval M1–E401 is carboxyphosphate synthetic domain. ATP contacts are provided by R129, R169, G175, G176, K208, I210, E215, G241, V242, H243, Q284, and E298. The region spanning R133–V327 is the ATP-grasp 1 domain. Q284, E298, and N300 together coordinate Mg(2+). Residues Q284, E298, and N300 each contribute to the Mn(2+) site. Residues L402–G548 are oligomerization domain. The interval D549–W928 is carbamoyl phosphate synthetic domain. One can recognise an ATP-grasp 2 domain in the interval Y675–A863. The ATP site is built by R711, Q748, V750, E754, G779, V780, H781, S782, Q822, and E834. Mg(2+)-binding residues include Q822, E834, and N836. Residues Q822, E834, and N836 each contribute to the Mn(2+) site. The MGS-like domain occupies T925–S1027. The segment at S929–Q1030 is allosteric domain.

Belongs to the CarB family. In terms of assembly, composed of two chains; the small (or glutamine) chain promotes the hydrolysis of glutamine to ammonia, which is used by the large (or ammonia) chain to synthesize carbamoyl phosphate. Tetramer of heterodimers (alpha,beta)4. Mg(2+) serves as cofactor. It depends on Mn(2+) as a cofactor.

The enzyme catalyses hydrogencarbonate + L-glutamine + 2 ATP + H2O = carbamoyl phosphate + L-glutamate + 2 ADP + phosphate + 2 H(+). The catalysed reaction is hydrogencarbonate + NH4(+) + 2 ATP = carbamoyl phosphate + 2 ADP + phosphate + 2 H(+). The protein operates within amino-acid biosynthesis; L-arginine biosynthesis; carbamoyl phosphate from bicarbonate: step 1/1. Its function is as follows. Large subunit of the glutamine-dependent carbamoyl phosphate synthetase (CPSase). CPSase catalyzes the formation of carbamoyl phosphate from the ammonia moiety of glutamine, carbonate, and phosphate donated by ATP, constituting the first step of the biosynthetic pathway leading to arginine and/or urea. The large subunit (synthetase) binds the substrates ammonia (free or transferred from glutamine from the small subunit), hydrogencarbonate and ATP and carries out an ATP-coupled ligase reaction, activating hydrogencarbonate by forming carboxy phosphate which reacts with ammonia to form carbamoyl phosphate. The protein is Carbamoyl phosphate synthase arginine-specific large chain of Bacillus subtilis (strain 168).